We begin with the raw amino-acid sequence, 277 residues long: F420-dependent methylenetetrahydromethanopterin dehydrogenase (277 aa).

The interval 249 to 277 (EKATDSVSRKPHGADGKRLNKTKLMEKPE) is disordered.

The protein belongs to the MTD family.

The catalysed reaction is 5,10-methylenetetrahydromethanopterin + oxidized coenzyme F420-(gamma-L-Glu)(n) + 2 H(+) = 5,10-methenyl-5,6,7,8-tetrahydromethanopterin + reduced coenzyme F420-(gamma-L-Glu)(n). Its pathway is one-carbon metabolism; methanogenesis from CO(2); 5,10-methylene-5,6,7,8-tetrahydromethanopterin from 5,10-methenyl-5,6,7,8-tetrahydromethanopterin (coenzyme F420 route): step 1/1. Functionally, catalyzes the reversible reduction of methenyl-H(4)MPT(+) to methylene-H(4)MPT. The protein is F420-dependent methylenetetrahydromethanopterin dehydrogenase of Methanococcus aeolicus (strain ATCC BAA-1280 / DSM 17508 / OCM 812 / Nankai-3).